The primary structure comprises 278 residues: Dehydrogenase/reductase SDR family member 4 (278 aa).

Residue 36–60 (LVTASTDGIGFAIARRLAQDGAHVV) participates in NADP(+) binding. The residue at position 92 (Lys-92) is an N6-acetyllysine; alternate. Lys-92 is subject to N6-succinyllysine; alternate. Lys-105 carries the post-translational modification N6-acetyllysine. Ser-169 contacts substrate. The Proton acceptor role is filled by Tyr-182. Lys-186 contacts NADP(+). At Lys-216 the chain carries N6-acetyllysine; alternate. Residue Lys-216 is modified to N6-succinyllysine; alternate. At Ser-220 the chain carries Phosphoserine. An N6-succinyllysine mark is found at Lys-227 and Lys-234. Residues 276-278 (SRL) carry the Peroxisomal targeting signal motif.

The protein belongs to the short-chain dehydrogenases/reductases (SDR) family. Homotetramer.

It localises to the peroxisome. The catalysed reaction is a secondary alcohol + NADP(+) = a ketone + NADPH + H(+). It carries out the reaction 3beta-hydroxy-5beta-pregnane-20-one + NADP(+) = 5beta-pregnan-3,20-dione + NADPH + H(+). It catalyses the reaction 5beta-dihydrotestosterone + NADPH + H(+) = 5beta-androstane-3beta,17beta-diol + NADP(+). The enzyme catalyses 5beta-androstane-3,17-dione + NADPH + H(+) = 3beta-hydroxy-5beta-androstane-17-one + NADP(+). The catalysed reaction is isatin + NADPH + H(+) = 3-hydroxyindolin-2-one + NADP(+). It carries out the reaction lithocholate + NADP(+) = 3-oxo-5beta-cholan-24-oate + NADPH + H(+). It catalyses the reaction 3-oxo-5beta-cholan-24-oate + NADPH + H(+) = isolithocholate + NADP(+). Functionally, NADPH-dependent oxidoreductase which catalyzes the reduction of a variety of compounds bearing carbonyl groups including ketosteroids, alpha-dicarbonyl compounds, aldehydes, aromatic ketones and quinones. Reduces 3-ketosteroids and benzil into 3beta-hydroxysteroids and R-benzoin, respectively, in contrast to the stereoselectivity of non-primate DHRS4s which produce 3alpha-hydroxysteroids and S-benzoin. Diplays low activity toward all-trans-retinal and no activity toward 9-cis-retinal as compared to non-primate mammals. In the reverse reaction, catalyze the NAD-dependent oxidation of 3beta-hydroxysteroids and alcohol, but with much lower efficiency. Involved in the metabolism of 3beta-hydroxysteroids, isatin and xenobiotic carbonyl compounds. This chain is Dehydrogenase/reductase SDR family member 4 (DHRS4), found in Pongo abelii (Sumatran orangutan).